Consider the following 393-residue polypeptide: uncharacterized protein (393 aa).

The B box-type zinc finger occupies 6–47 (KYDNKCAIHKEHKIKMICATCKDVVCNECILLDHNGHKFGRI). Zn(2+) contacts are provided by cysteine 11, histidine 14, cysteine 34, and histidine 39.

This is an uncharacterized protein from Dictyostelium discoideum (Social amoeba).